Reading from the N-terminus, the 111-residue chain is Ribonuclease P protein component (111 aa).

It belongs to the RnpA family. As to quaternary structure, consists of a catalytic RNA component (M1 or rnpB) and a protein subunit.

It catalyses the reaction Endonucleolytic cleavage of RNA, removing 5'-extranucleotides from tRNA precursor.. In terms of biological role, RNaseP catalyzes the removal of the 5'-leader sequence from pre-tRNA to produce the mature 5'-terminus. It can also cleave other RNA substrates such as 4.5S RNA. The protein component plays an auxiliary but essential role in vivo by binding to the 5'-leader sequence and broadening the substrate specificity of the ribozyme. The protein is Ribonuclease P protein component of Clostridium botulinum (strain Loch Maree / Type A3).